We begin with the raw amino-acid sequence, 264 residues long: Purine nucleoside phosphorylase slr1573 (264 aa).

Residues histidine 61, cysteine 104, and histidine 121 each contribute to the Zn(2+) site.

This sequence belongs to the purine nucleoside phosphorylase YfiH/LACC1 family. Homodimer. Cu(2+) is required as a cofactor. Zn(2+) serves as cofactor.

It catalyses the reaction adenosine + phosphate = alpha-D-ribose 1-phosphate + adenine. It carries out the reaction S-methyl-5'-thioadenosine + phosphate = 5-(methylsulfanyl)-alpha-D-ribose 1-phosphate + adenine. The catalysed reaction is inosine + phosphate = alpha-D-ribose 1-phosphate + hypoxanthine. The enzyme catalyses adenosine + H2O + H(+) = inosine + NH4(+). In terms of biological role, purine nucleoside enzyme that catalyzes the phosphorolysis of adenosine and inosine nucleosides, yielding D-ribose 1-phosphate and the respective free bases, adenine and hypoxanthine. Also catalyzes the phosphorolysis of S-methyl-5'-thioadenosine into adenine and S-methyl-5-thio-alpha-D-ribose 1-phosphate. Also has adenosine deaminase activity. In Synechocystis sp. (strain ATCC 27184 / PCC 6803 / Kazusa), this protein is Purine nucleoside phosphorylase slr1573.